A 431-amino-acid polypeptide reads, in one-letter code: Adenylosuccinate synthetase (431 aa).

Residues 12-18 (GDEGKGK) and 40-42 (GHT) contribute to the GTP site. Asp13 acts as the Proton acceptor in catalysis. 2 residues coordinate Mg(2+): Asp13 and Gly40. Residues 13 to 16 (DEGK), 38 to 41 (NAGH), Thr130, Arg144, Gln225, Thr240, and Arg304 contribute to the IMP site. His41 functions as the Proton donor in the catalytic mechanism. 300–306 (ATTGRPR) contributes to the substrate binding site. GTP-binding positions include Arg306, 332–334 (KLD), and 414–416 (SVG).

It belongs to the adenylosuccinate synthetase family. In terms of assembly, homodimer. The cofactor is Mg(2+).

It is found in the cytoplasm. It carries out the reaction IMP + L-aspartate + GTP = N(6)-(1,2-dicarboxyethyl)-AMP + GDP + phosphate + 2 H(+). The protein operates within purine metabolism; AMP biosynthesis via de novo pathway; AMP from IMP: step 1/2. Plays an important role in the de novo pathway of purine nucleotide biosynthesis. Catalyzes the first committed step in the biosynthesis of AMP from IMP. This chain is Adenylosuccinate synthetase, found in Geotalea daltonii (strain DSM 22248 / JCM 15807 / FRC-32) (Geobacter daltonii).